The following is a 102-amino-acid chain: uncharacterized protein (102 aa).

Residues Ile36–Leu55 traverse the membrane as a helical segment.

Its subcellular location is the membrane. This is an uncharacterized protein from Homo sapiens (Human).